The chain runs to 459 residues: Pentatricopeptide repeat-containing protein At5g18390, mitochondrial (459 aa).

The N-terminal 7 residues, 1–7 (MLLLRRY), are a transit peptide targeting the mitochondrion. 9 PPR repeats span residues 110–144 (TSME…SLDI), 145–175 (SGET…VPKT), 181–215 (TVDV…GLKP), 216–250 (DKRT…GFNP), 251–285 (PARG…GFVP), 286–320 (DIQT…GLCV), 321–355 (DIDT…GHKP), 356–390 (FPSL…AHPP), and 391–425 (NRPV…GLVP).

It belongs to the PPR family. P subfamily.

It is found in the mitochondrion. The protein is Pentatricopeptide repeat-containing protein At5g18390, mitochondrial of Arabidopsis thaliana (Mouse-ear cress).